The chain runs to 119 residues: UPF0102 protein HI_1656 (119 aa).

Belongs to the UPF0102 family.

In Haemophilus influenzae (strain ATCC 51907 / DSM 11121 / KW20 / Rd), this protein is UPF0102 protein HI_1656.